Consider the following 145-residue polypeptide: Putative pre-16S rRNA nuclease (145 aa).

This sequence belongs to the YqgF nuclease family.

The protein localises to the cytoplasm. Functionally, could be a nuclease involved in processing of the 5'-end of pre-16S rRNA. This is Putative pre-16S rRNA nuclease from Pseudomonas fluorescens (strain ATCC BAA-477 / NRRL B-23932 / Pf-5).